Consider the following 92-residue polypeptide: Small ribosomal subunit protein uS19 (92 aa).

It belongs to the universal ribosomal protein uS19 family.

Protein S19 forms a complex with S13 that binds strongly to the 16S ribosomal RNA. The protein is Small ribosomal subunit protein uS19 of Chromobacterium violaceum (strain ATCC 12472 / DSM 30191 / JCM 1249 / CCUG 213 / NBRC 12614 / NCIMB 9131 / NCTC 9757 / MK).